We begin with the raw amino-acid sequence, 343 residues long: D-alanine--D-alanine ligase (343 aa).

The ATP-grasp domain occupies 129–335 (KYVLENFGVK…YGELISEIIE (207 aa)). ATP is bound at residue 162 to 217 (ENKLGYDVFIKPSNSGSSVGISKAHNREELEAGLEEALKFDRKVLVEVALNAREIE). Residues Asp288, Glu302, and Asn304 each contribute to the Mg(2+) site.

It belongs to the D-alanine--D-alanine ligase family. Mg(2+) serves as cofactor. Requires Mn(2+) as cofactor.

The protein resides in the cytoplasm. It carries out the reaction 2 D-alanine + ATP = D-alanyl-D-alanine + ADP + phosphate + H(+). It participates in cell wall biogenesis; peptidoglycan biosynthesis. Its function is as follows. Cell wall formation. The chain is D-alanine--D-alanine ligase from Clostridium novyi (strain NT).